Consider the following 157-residue polypeptide: Cell cycle regulator of non-homologous end joining (157 aa).

Methionine 1 carries the post-translational modification N-acetylmethionine. The KBM signature appears at 1-21 (METLKSKTKTRVLPSWMTAPV). Over residues 80 to 91 (KPWEQRSLEATD) the composition is skewed to basic and acidic residues. Residues 80–148 (KPWEQRSLEA…EEEKEEEDAL (69 aa)) form a disordered region. A compositionally biased stretch (low complexity) spans 96–106 (SPPCSSSPGSS). The short motif at 147–157 (ALKYVREIFFS) is the XLM element.

In terms of assembly, interacts (via KBM motif) with XRCC5/Ku80 and XRCC6/Ku70 heterodimer. Interacts (via XLF motif) with TRIM28/KAP1, ATM, MRE11, NBN and RAD50. Interacts with splicing factor SF3B1. Interacts with ERCC6L2; this interaction is DNA independent.

Its subcellular location is the cytoplasm. It localises to the nucleus. The protein resides in the chromosome. Its function is as follows. Cell-cycle-specific regulator of classical non-homologous end joining (NHEJ) of DNA double-strand break (DSB) repair, which can act both as an activator or inhibitor of NHEJ, depending on the cell cycle phase. Acts as a regulator of DNA repair pathway choice by specifically inhibiting classical NHEJ during the S and G2 phases, thereby promoting error-free repair by homologous recombination during cell cycle phases when sister chromatids are present. Preferentially protects single-stranded overhangs at break sites by inhibiting classical NHEJ, thereby creating a local environment that favors homologous recombination. Acts via interaction with XRCC5/Ku80 and XRCC6/Ku70. In contrast, acts as an activator of NHEJ during G1 phase of the cell cycle: promotes classical NHEJ in G1 phase cells via multivalent interactions that increase the affinity of DNA damage response proteins for DSB-associated chromatin. Also involved in immunoglobulin V(D)J recombination. May also act as an indirect regulator of proteasome. The polypeptide is Cell cycle regulator of non-homologous end joining (Mus musculus (Mouse)).